The following is a 31-amino-acid chain: Cytochrome b6-f complex subunit 6 (31 aa).

Residues Ile4 to Gly24 form a helical membrane-spanning segment.

It belongs to the PetL family. As to quaternary structure, the 4 large subunits of the cytochrome b6-f complex are cytochrome b6, subunit IV (17 kDa polypeptide, PetD), cytochrome f and the Rieske protein, while the 4 small subunits are PetG, PetL, PetM and PetN. The complex functions as a dimer.

It localises to the plastid. It is found in the chloroplast thylakoid membrane. Component of the cytochrome b6-f complex, which mediates electron transfer between photosystem II (PSII) and photosystem I (PSI), cyclic electron flow around PSI, and state transitions. PetL is important for photoautotrophic growth as well as for electron transfer efficiency and stability of the cytochrome b6-f complex. This Lepidium virginicum (Virginia pepperweed) protein is Cytochrome b6-f complex subunit 6.